We begin with the raw amino-acid sequence, 282 residues long: Phosphatidylglycerol--prolipoprotein diacylglyceryl transferase (282 aa).

3 helical membrane passes run 18–38, 55–75, and 89–109; these read LSIK…YFIA, VIFY…VIFQ, and IWHG…TGII. Position 137 (arginine 137) interacts with a 1,2-diacyl-sn-glycero-3-phospho-(1'-sn-glycerol). Helical transmembrane passes span 203–223 and 235–255; these read VGET…FVEG and IRVA…ILIY.

Belongs to the Lgt family.

The protein localises to the cell membrane. The enzyme catalyses L-cysteinyl-[prolipoprotein] + a 1,2-diacyl-sn-glycero-3-phospho-(1'-sn-glycerol) = an S-1,2-diacyl-sn-glyceryl-L-cysteinyl-[prolipoprotein] + sn-glycerol 1-phosphate + H(+). The protein operates within protein modification; lipoprotein biosynthesis (diacylglyceryl transfer). Its function is as follows. Catalyzes the transfer of the diacylglyceryl group from phosphatidylglycerol to the sulfhydryl group of the N-terminal cysteine of a prolipoprotein, the first step in the formation of mature lipoproteins. In Staphylococcus haemolyticus (strain JCSC1435), this protein is Phosphatidylglycerol--prolipoprotein diacylglyceryl transferase.